The primary structure comprises 263 residues: 5'-nucleotidase SurE (263 aa).

The a divalent metal cation site is built by Asp15, Asp16, Ser46, and Asn102.

It belongs to the SurE nucleotidase family. The cofactor is a divalent metal cation.

It is found in the cytoplasm. It carries out the reaction a ribonucleoside 5'-phosphate + H2O = a ribonucleoside + phosphate. Nucleotidase that shows phosphatase activity on nucleoside 5'-monophosphates. In Chlorobaculum tepidum (strain ATCC 49652 / DSM 12025 / NBRC 103806 / TLS) (Chlorobium tepidum), this protein is 5'-nucleotidase SurE.